Reading from the N-terminus, the 323-residue chain is NADH-ubiquinone oxidoreductase chain 1 (323 aa).

A run of 8 helical transmembrane segments spans residues 8–28 (LINP…LTLI), 75–95 (MFLI…APLP), 105–125 (LGIL…LGSG), 151–171 (LGLI…TTLM), 177–197 (MWLI…TLAE), 234–254 (ANIL…SSFM), 258–278 (ELTT…FLWV), and 298–318 (FLPI…SMLG).

The protein belongs to the complex I subunit 1 family. As to quaternary structure, core subunit of respiratory chain NADH dehydrogenase (Complex I) which is composed of 45 different subunits.

It is found in the mitochondrion inner membrane. The catalysed reaction is a ubiquinone + NADH + 5 H(+)(in) = a ubiquinol + NAD(+) + 4 H(+)(out). Its function is as follows. Core subunit of the mitochondrial membrane respiratory chain NADH dehydrogenase (Complex I) which catalyzes electron transfer from NADH through the respiratory chain, using ubiquinone as an electron acceptor. Essential for the catalytic activity and assembly of complex I. This is NADH-ubiquinone oxidoreductase chain 1 (mt-nd1) from Xenopus laevis (African clawed frog).